The following is a 358-amino-acid chain: MITLLKGRRKVDTIKVGILGYGLSGSVFHGPLLDVLDEYQISKIMTSRTEEVKRDFPDAEVVHELEEITNDPAIELVIVTTPSGLHYEHTMACIQAGKHVVMEKPMTATAEEGETLKRAADEKGVLLSVYHNRRWDNDFLTIKKLISEGSLEDINTYQVSYNRYRPEVQARWREKEGTATGTLYDLGSHIIDQTLHLFGMPKAVTANVMAQRENAETVDYFHLTLDYGKLQAILYGGSIVPANGPRYQIHGKDSSFIKYGIDGQEDALRAGRKPEDDSWGADVPEFYGKLTTIRGSDKKTETIPSVNGSYLTYYRKIAESIREGAALPVTAEEGINVIRIIEAAMESSKEKRTIMLEH.

Belongs to the Gfo/Idh/MocA family.

It catalyses the reaction scyllo-inositol + NADP(+) = scyllo-inosose + NADPH + H(+). Functionally, catalyzes the reversible NADPH-dependent reduction of scyllo-inosose (SIS) to scyllo-inositol (SI). Cannot use NADH instead of NADPH. May be involved in reduction of not only SIS but also various oxidized compounds manifested upon stressful conditions. The polypeptide is scyllo-inositol 2-dehydrogenase (NADP(+)) IolW (Bacillus subtilis (strain 168)).